The primary structure comprises 372 residues: Peptide chain release factor 2 (372 aa).

Position 253 is an N5-methylglutamine (glutamine 253).

This sequence belongs to the prokaryotic/mitochondrial release factor family. Methylated by PrmC. Methylation increases the termination efficiency of RF2.

The protein resides in the cytoplasm. Peptide chain release factor 2 directs the termination of translation in response to the peptide chain termination codons UGA and UAA. The sequence is that of Peptide chain release factor 2 from Mycolicibacterium gilvum (strain PYR-GCK) (Mycobacterium gilvum (strain PYR-GCK)).